The sequence spans 441 residues: BTB/POZ domain-containing protein At4g30940 (441 aa).

In terms of domain architecture, BTB spans 6 to 74 (DRIKFNVGGR…LRTGDLNIPP (69 aa)).

The protein operates within protein modification; protein ubiquitination. May act as a substrate-specific adapter of an E3 ubiquitin-protein ligase complex (CUL3-RBX1-BTB) which mediates the ubiquitination and subsequent proteasomal degradation of target proteins. The sequence is that of BTB/POZ domain-containing protein At4g30940 from Arabidopsis thaliana (Mouse-ear cress).